The following is a 509-amino-acid chain: MAALGGLTHSRTLFVDDDGTPMSFYVPPGPLKRQLYPLITHGGGEMCRMQQPGALLLSAPGSAQGAQYVSTAYIMDCVRIDKLLDVDDYRLDGSHGRPRKSQGSKKEERAPQQKVGESSQESDQKQQAKVGGDLEEGDKLSDPGEPVNEESLGSVSSTRKKENKMDCSEAQKIGSLKSARIHQTRRNVFTEKEDVAIMLYVRENAPHRGTGVSLWKEMEQKQVVKRTWQAIKNRYFRYLKGKRNYVLPLTDDSSSQEPSDDEEECPQPITKKSRISDSTPCTEKPGVAEKTGEKLSTDTSVEGPSTEKSDAAKTSNVNLPVEERGQEVTEGAIKRSEGNKKSTEMNEEAVSASSKENQDDGADLHIFEIANLEFEVEDTPELEVPKRSFGLKEFVMGEDLPSSQSQTQVDEVSSSPDASESEGLQEALLSMMSEFKLSLCDVTQALLKNNGELAATRHFLQTGSRPDGYPIWVRKDDLDLQKDDAETLKRLIQKYGADNVAKRVAFLAS.

Residues 1-91 form the BRCT domain; sequence MAALGGLTHS…KLLDVDDYRL (91 aa). The disordered stretch occupies residues 93–168; it reads GSHGRPRKSQ…RKKENKMDCS (76 aa). Positions 115-127 are enriched in polar residues; sequence VGESSQESDQKQQ. The segment covering 159–168 has biased composition (basic and acidic residues); it reads RKKENKMDCS. The 55-residue stretch at 185 to 239 folds into the Myb-like domain; the sequence is RRNVFTEKEDVAIMLYVRENAPHRGTGVSLWKEMEQKQVVKRTWQAIKNRYFRYL. 2 disordered regions span residues 249-359 and 399-423; these read LTDD…ENQD and DLPS…ESEG. Basic and acidic residues-rich tracts occupy residues 286–296 and 321–344; these read GVAEKTGEKLS and VEER…KSTE. Positions 401–418 are enriched in polar residues; sequence PSSQSQTQVDEVSSSPDA. Residues 493–509 carry the Nuclear localization signal motif; the sequence is QKYGADNVAKRVAFLAS.

The protein belongs to the RAP1 family. Homodimer. Component of the shelterin complex (telosome). Interacts with terf2; the interaction is direct.

It is found in the nucleus. It localises to the chromosome. The protein localises to the telomere. Its function is as follows. Acts both as a regulator of telomere function and as a transcription regulator. Involved in the regulation of telomere length and protection as a component of the shelterin complex (telosome). Does not bind DNA directly: recruited to telomeric double-stranded 5'-TTAGGG-3' repeats via its interaction with terf2. Independently of its function in telomeres, also acts as a transcription regulator: recruited to extratelomeric 5'-TTAGGG-3' sites via its association with terf2 or other factors, and regulates gene expression. The protein is Telomeric repeat-binding factor 2-interacting protein 1 (terf2ip) of Xenopus tropicalis (Western clawed frog).